Consider the following 288-residue polypeptide: MAAKIIDGKTIAQQVRSEVAQKVQARVAAGLRAPGLAVVLVGSNPASQIYVASKRKACDEVGFVSRSYDLPETTSEAELLALIDTLNADNTIDGILVQLPLPAGIDNVKVLERIAPDKDVDGFHPYNVGRLCQRAPRLRPCTPRGIVTLLERYNIDTYGLNAVVIGASNIVGRPMSMELLLAGCTTTVTHRFTKDLRHHVEHADLLIVAVGKPGFIPGEWIKEGAIVIDVGINRLENGKVVGDVVFDEAAARASYITPVPGGVGPMTVATLIENTLQACIEYHDPQGK.

NADP(+)-binding positions include 166 to 168 (GAS) and isoleucine 232.

It belongs to the tetrahydrofolate dehydrogenase/cyclohydrolase family. As to quaternary structure, homodimer.

It carries out the reaction (6R)-5,10-methylene-5,6,7,8-tetrahydrofolate + NADP(+) = (6R)-5,10-methenyltetrahydrofolate + NADPH. The enzyme catalyses (6R)-5,10-methenyltetrahydrofolate + H2O = (6R)-10-formyltetrahydrofolate + H(+). It functions in the pathway one-carbon metabolism; tetrahydrofolate interconversion. Functionally, catalyzes the oxidation of 5,10-methylenetetrahydrofolate to 5,10-methenyltetrahydrofolate and then the hydrolysis of 5,10-methenyltetrahydrofolate to 10-formyltetrahydrofolate. The sequence is that of Bifunctional protein FolD from Salmonella heidelberg (strain SL476).